Here is a 1313-residue protein sequence, read N- to C-terminus: Inactive protein tyrosine kinase pTKL (1313 aa).

2 MORN repeats span residues 20 to 42 (YAGDLNVDNLPHGRGLMLYENGN) and 45 to 63 (FGHFINGKKHGKGIYIDKN). 7 N-linked (GlcNAc...) asparagine glycosylation sites follow: N63, N131, N178, N208, N254, N260, and N288. Residues 300–365 (WNKEQVAQWL…LQLIKNLRVT (66 aa)) form the SAM domain. N466, N516, N525, N528, and N534 each carry an N-linked (GlcNAc...) asparagine glycan. The span at 569-580 (EPIKPNKEKEEN) shows a compositional bias: basic and acidic residues. The interval 569 to 631 (EPIKPNKEKE…SEKSSETSSE (63 aa)) is disordered. Residues 586–604 (PIINSKNETNLLNDSNPTK) are compositionally biased toward polar residues. N592, N598, N661, N678, N729, N735, and N749 each carry an N-linked (GlcNAc...) asparagine glycan. Position 782 (K782) interacts with ATP. N790, N868, N940, N983, and N1000 each carry an N-linked (GlcNAc...) asparagine glycan. The Protein kinase domain occupies 962–1294 (FRNKNNILCG…FDRILIEISM (333 aa)). The RVxF motif motif lies at 1052-1055 (KILF). N-linked (GlcNAc...) asparagine glycans are attached at residues N1191 and N1198.

This sequence belongs to the protein kinase superfamily. TKL Ser/Thr protein kinase family.

It is found in the parasitophorous vacuole. It localises to the host cell membrane. Its subcellular location is the host cytoplasm. The protein resides in the host cytoskeleton. The chain is Inactive protein tyrosine kinase pTKL from Plasmodium berghei (strain Anka).